The sequence spans 448 residues: Phosphoglucosamine mutase (448 aa).

Serine 108 (phosphoserine intermediate) is an active-site residue. Positions 108, 247, 249, and 251 each coordinate Mg(2+). Position 108 is a phosphoserine (serine 108).

It belongs to the phosphohexose mutase family. The cofactor is Mg(2+). Activated by phosphorylation.

The catalysed reaction is alpha-D-glucosamine 1-phosphate = D-glucosamine 6-phosphate. In terms of biological role, catalyzes the conversion of glucosamine-6-phosphate to glucosamine-1-phosphate. This chain is Phosphoglucosamine mutase, found in Herminiimonas arsenicoxydans.